Reading from the N-terminus, the 335-residue chain is D-alanine--D-alanine ligase (335 aa).

One can recognise an ATP-grasp domain in the interval 124–329 (KMWFSALGVP…FTHYLYSNIK (206 aa)). Residue 154–209 (ALENWGSIFIKAASQGSSVGCYRVDSQDELVSSLEQAFSFSPYVIVEKTINARELE) participates in ATP binding. Residues Asp-283, Glu-296, and Asn-298 each contribute to the Mg(2+) site.

Belongs to the D-alanine--D-alanine ligase family. Mg(2+) is required as a cofactor. The cofactor is Mn(2+).

Its subcellular location is the cytoplasm. The enzyme catalyses 2 D-alanine + ATP = D-alanyl-D-alanine + ADP + phosphate + H(+). Its pathway is cell wall biogenesis; peptidoglycan biosynthesis. Functionally, cell wall formation. In Shewanella woodyi (strain ATCC 51908 / MS32), this protein is D-alanine--D-alanine ligase.